The following is a 155-amino-acid chain: Anaerobic ribonucleoside-triphosphate reductase-activating protein (155 aa).

3 residues coordinate [4Fe-4S] cluster: C26, C30, and C33. S-adenosyl-L-methionine is bound by residues 32–34 and G74; that span reads GCY.

It belongs to the organic radical-activating enzymes family. Forms a tetramer composed of two NrdD and two NrdG subunits. Requires [4Fe-4S] cluster as cofactor.

It is found in the cytoplasm. It catalyses the reaction glycyl-[protein] + reduced [flavodoxin] + S-adenosyl-L-methionine = glycin-2-yl radical-[protein] + semiquinone [flavodoxin] + 5'-deoxyadenosine + L-methionine + H(+). Its function is as follows. Activation of anaerobic ribonucleoside-triphosphate reductase under anaerobic conditions by generation of an organic free radical, using S-adenosylmethionine and reduced flavodoxin as cosubstrates to produce 5'-deoxy-adenosine. The protein is Anaerobic ribonucleoside-triphosphate reductase-activating protein (nrdG) of Vibrio cholerae serotype O1 (strain ATCC 39315 / El Tor Inaba N16961).